A 561-amino-acid chain; its full sequence is MCGIWALFGSDDCLSVQCLSAMKIAHRGPDAFRFENVNGYTNCCFGFHRLAVVDPLFGMQPIRVKKYPYLWLCYNGEIYNHKKMQQHFEFEYQTKVDGEIILHLYDKGGIEQTICMLDGVFAFVLLDTANKKVFLGRDTYGVRPLFKAMTEDGFLAVCSEAKGLVTLKHSATPFLKVEPFLPGHYEVLDLKPNGKVASVEMVKYHHCRDVPLHALYDNVEKLFPGFEIETVKNNLRILFNNAVKKRLMTDRRIGCLLSGGLDSSLVAATLLKQLKEAQVQYPLQTFAIGMEDSPDLLAARKVADHIGSEHYEVLFNSEEGIQALDEVIFSLETYDITTVRASVGMYLISKYIRKNTDSVVIFSGEGSDELTQGYIYFHKAPSPEKAEEESERLLRELYLFDVLRADRTTAAHGLELRVPFLDHRFSSYYLSLPPEMRIPKNGIEKHLLRETFEDSNLIPKEILWRPKEAFSDGITSVKNSWFKILQEYVEHQVDDAMMANAAQKFPFNTPKTKEGYYYRQVFERHYPGRADWLSHYWMPKWINATDPSARTLTHYKSAVKA.

The active-site For GATase activity is the Cys2. Positions 2-191 constitute a Glutamine amidotransferase type-2 domain; it reads CGIWALFGSD…PGHYEVLDLK (190 aa). Residues 49–53, 75–77, and Asp97 each bind L-glutamine; these read RLAVV and NGE. The 324-residue stretch at 213 to 536 folds into the Asparagine synthetase domain; that stretch reads HALYDNVEKL…PGRADWLSHY (324 aa). Residues Leu256, Ile288, and 363–364 each bind ATP; that span reads SG. Position 385 is an N6-acetyllysine (Lys385). Thr545 bears the Phosphothreonine mark. Ser557 is subject to Phosphoserine.

It carries out the reaction L-aspartate + L-glutamine + ATP + H2O = L-asparagine + L-glutamate + AMP + diphosphate + H(+). It functions in the pathway amino-acid biosynthesis; L-asparagine biosynthesis; L-asparagine from L-aspartate (L-Gln route): step 1/1. The polypeptide is Asparagine synthetase [glutamine-hydrolyzing] (ASNS) (Homo sapiens (Human)).